Consider the following 93-residue polypeptide: Small ribosomal subunit protein uS19 (93 aa).

It belongs to the universal ribosomal protein uS19 family.

Protein S19 forms a complex with S13 that binds strongly to the 16S ribosomal RNA. This chain is Small ribosomal subunit protein uS19, found in Rubrobacter xylanophilus (strain DSM 9941 / JCM 11954 / NBRC 16129 / PRD-1).